Consider the following 137-residue polypeptide: MQYDYGTEDNEVNHIYSENERQKERENECAGPCLYLAPPADVCIFFLFPFVLSPRGGGKEKKKKKVRKVRCASPLLLLHPDITPNTKPRAAVVSNRSTHSSTVCRSLSTMCMFYGYVPIFSAFGIIFCFDNYRSCYC.

2 helical membrane passes run 36-52 (LAPP…PFVL) and 113-129 (FYGY…IFCF).

The protein localises to the membrane. This is an uncharacterized protein from Saccharomyces cerevisiae (strain ATCC 204508 / S288c) (Baker's yeast).